The primary structure comprises 833 residues: Leucine--tRNA ligase (833 aa).

The 'HIGH' region motif lies at 41–52 (PYPSGVGLHVGH). Positions 610-614 (KMSKS) match the 'KMSKS' region motif. Lysine 613 contacts ATP.

It belongs to the class-I aminoacyl-tRNA synthetase family.

It localises to the cytoplasm. The catalysed reaction is tRNA(Leu) + L-leucine + ATP = L-leucyl-tRNA(Leu) + AMP + diphosphate. In Streptococcus pneumoniae serotype 2 (strain D39 / NCTC 7466), this protein is Leucine--tRNA ligase.